The following is a 96-amino-acid chain: Putative pterin-4-alpha-carbinolamine dehydratase (96 aa).

It belongs to the pterin-4-alpha-carbinolamine dehydratase family.

It catalyses the reaction (4aS,6R)-4a-hydroxy-L-erythro-5,6,7,8-tetrahydrobiopterin = (6R)-L-erythro-6,7-dihydrobiopterin + H2O. The sequence is that of Putative pterin-4-alpha-carbinolamine dehydratase from Metallosphaera sedula (strain ATCC 51363 / DSM 5348 / JCM 9185 / NBRC 15509 / TH2).